The primary structure comprises 860 residues: Leucine--tRNA ligase (860 aa).

Positions 42-52 match the 'HIGH' region motif; it reads PYPSGRLHMGH. The 'KMSKS' region motif lies at 619-623; that stretch reads KMSKS. K622 provides a ligand contact to ATP.

The protein belongs to the class-I aminoacyl-tRNA synthetase family.

The protein resides in the cytoplasm. The enzyme catalyses tRNA(Leu) + L-leucine + ATP = L-leucyl-tRNA(Leu) + AMP + diphosphate. This is Leucine--tRNA ligase from Salmonella choleraesuis (strain SC-B67).